We begin with the raw amino-acid sequence, 465 residues long: Cysteine--tRNA ligase (465 aa).

Position 27 (Cys27) interacts with Zn(2+). A 'HIGH' region motif is present at residues 29 to 39; the sequence is PTVYNFFHIGN. Residues Cys207, His232, and Glu236 each contribute to the Zn(2+) site. The 'KMSKS' region signature appears at 264 to 268; that stretch reads KMSKS. Lys267 provides a ligand contact to ATP.

It belongs to the class-I aminoacyl-tRNA synthetase family. In terms of assembly, monomer. Requires Zn(2+) as cofactor.

It localises to the cytoplasm. It catalyses the reaction tRNA(Cys) + L-cysteine + ATP = L-cysteinyl-tRNA(Cys) + AMP + diphosphate. The chain is Cysteine--tRNA ligase from Clostridium kluyveri (strain NBRC 12016).